The following is a 486-amino-acid chain: Bifunctional protein GlmU (486 aa).

The pyrophosphorylase stretch occupies residues 1 to 241 (MSASDSSSAV…ARELAGVNDR (241 aa)). Residues 13-16 (LAAG), Lys-27, Gln-84, and 89-90 (GT) each bind UDP-N-acetyl-alpha-D-glucosamine. Asp-114 serves as a coordination point for Mg(2+). Gly-151, Glu-166, Asn-181, and Asn-239 together coordinate UDP-N-acetyl-alpha-D-glucosamine. Asn-239 is a Mg(2+) binding site. Positions 242 to 262 (VQLAEAGAELNRRTVEAAMRG) are linker. The interval 263–486 (GATIVDPATT…AQNSVPNQEG (224 aa)) is N-acetyltransferase. UDP-N-acetyl-alpha-D-glucosamine is bound by residues Arg-344 and Lys-362. Residue His-374 is the Proton acceptor of the active site. UDP-N-acetyl-alpha-D-glucosamine-binding residues include Tyr-377 and Asn-388. Acetyl-CoA-binding positions include Ala-391, 397 to 398 (NY), Ser-416, and Ala-434. Residues 464-486 (KRPGTAAADAAAAAQNSVPNQEG) are disordered.

This sequence in the N-terminal section; belongs to the N-acetylglucosamine-1-phosphate uridyltransferase family. It in the C-terminal section; belongs to the transferase hexapeptide repeat family. As to quaternary structure, homotrimer. Mg(2+) serves as cofactor.

The protein localises to the cytoplasm. The catalysed reaction is alpha-D-glucosamine 1-phosphate + acetyl-CoA = N-acetyl-alpha-D-glucosamine 1-phosphate + CoA + H(+). The enzyme catalyses N-acetyl-alpha-D-glucosamine 1-phosphate + UTP + H(+) = UDP-N-acetyl-alpha-D-glucosamine + diphosphate. The protein operates within nucleotide-sugar biosynthesis; UDP-N-acetyl-alpha-D-glucosamine biosynthesis; N-acetyl-alpha-D-glucosamine 1-phosphate from alpha-D-glucosamine 6-phosphate (route II): step 2/2. Its pathway is nucleotide-sugar biosynthesis; UDP-N-acetyl-alpha-D-glucosamine biosynthesis; UDP-N-acetyl-alpha-D-glucosamine from N-acetyl-alpha-D-glucosamine 1-phosphate: step 1/1. It functions in the pathway bacterial outer membrane biogenesis; LPS lipid A biosynthesis. Catalyzes the last two sequential reactions in the de novo biosynthetic pathway for UDP-N-acetylglucosamine (UDP-GlcNAc). The C-terminal domain catalyzes the transfer of acetyl group from acetyl coenzyme A to glucosamine-1-phosphate (GlcN-1-P) to produce N-acetylglucosamine-1-phosphate (GlcNAc-1-P), which is converted into UDP-GlcNAc by the transfer of uridine 5-monophosphate (from uridine 5-triphosphate), a reaction catalyzed by the N-terminal domain. This Corynebacterium efficiens (strain DSM 44549 / YS-314 / AJ 12310 / JCM 11189 / NBRC 100395) protein is Bifunctional protein GlmU.